The following is a 783-amino-acid chain: RNA exonuclease 5 (783 aa).

The Exonuclease domain maps to 230 to 378 (LFGLDCEMCL…EDARTTLELA (149 aa)). RRM domains lie at 503–577 (STVY…RPVT) and 598–677 (GTIY…RHLH).

The sequence is that of RNA exonuclease 5 (REXO5) from Bos taurus (Bovine).